Reading from the N-terminus, the 870-residue chain is DNA mismatch repair protein MutS (870 aa).

617 to 624 provides a ligand contact to ATP; the sequence is GPNMAGKS.

This sequence belongs to the DNA mismatch repair MutS family.

In terms of biological role, this protein is involved in the repair of mismatches in DNA. It is possible that it carries out the mismatch recognition step. This protein has a weak ATPase activity. The protein is DNA mismatch repair protein MutS of Phocaeicola vulgatus (strain ATCC 8482 / DSM 1447 / JCM 5826 / CCUG 4940 / NBRC 14291 / NCTC 11154) (Bacteroides vulgatus).